Consider the following 580-residue polypeptide: Rho guanine nucleotide exchange factor 25 (580 aa).

Positions 48 to 67 (AASGLAAPSGPSSGLSSGPC) are enriched in low complexity. Disordered stretches follow at residues 48–76 (AASGLAAPSGPSSGLSSGPCSPGPPGPVS) and 128–157 (LEGPGDKTQPPEEETLSQAPESEEEQKKKA). The DH domain maps to 160–336 (RSMYVLSELV…CFVPKRCNDM (177 aa)). The segment at 278 to 299 (LGHRLQLNDLLIKPVQRIMKYQ) is important for binding to Rho GTPases. One can recognise a PH domain in the interval 348-466 (KLTAQGKLLG…WIKHVAQILE (119 aa)). The sufficient to bind activated GNAQ stretch occupies residues 467–493 (SQRDFLNALQSPIEYQRRESQTNSLGR). Disordered regions lie at residues 482–524 (QRRE…GSLP) and 545–580 (ALGDIPQAPHDSPPVSPTPKTPPCQARLAKLDEDEL). The span at 509-520 (DQAQGSTHTPIN) shows a compositional bias: polar residues. Over residues 555–566 (DSPPVSPTPKTP) the composition is skewed to pro residues.

In terms of assembly, interacts (via the DH domain) with POPDC1 (via the C-terminus cytoplasmic tail). Interacts with activated GNAQ and GNA11. Interacts with RHOA, CDC42 and RAC1. In terms of tissue distribution, isoform 1 and isoform 2 are highly expressed in excitable tissues, such as brain, heart and muscle. Also detected in kidney and liver.

It localises to the cell membrane. Its subcellular location is the cytoplasm. The protein localises to the myofibril. It is found in the sarcomere. Its function is as follows. May play a role in actin cytoskeleton reorganization in different tissues since its activation induces formation of actin stress fibers. It works as a guanine nucleotide exchange factor for Rho family of small GTPases. Links specifically G alpha q/11-coupled receptors to RHOA activation. May be an important regulator of processes involved in axon and dendrite formation. In neurons seems to be an exchange factor primarily for RAC1. Involved in skeletal myogenesis. This is Rho guanine nucleotide exchange factor 25 (ARHGEF25) from Homo sapiens (Human).